A 317-amino-acid chain; its full sequence is Melanocyte-stimulating hormone receptor (317 aa).

Residues 1 to 37 (MAVQGSQRRLLGSLNSTPTAIPQLGLAANQTGARCLE) are Extracellular-facing. The N-linked (GlcNAc...) asparagine glycan is linked to asparagine 29. The helical transmembrane segment at 38–63 (VSISDGLFLSLGLVSLVENALVVATI) threads the bilayer. Residues 64–72 (AKNRNLHSP) are Cytoplasmic-facing. A helical transmembrane segment spans residues 73 to 93 (MYCFICCLALSDLLVSGSNVL). Residues 94–118 (ETAVILLLEAGALVARAAVLQQLDN) lie on the Extracellular side of the membrane. The helical transmembrane segment at 119–140 (VIDVITCSSMLSSLCFLGAIAV) threads the bilayer. Over 141 to 163 (DRYISIFYALRYHSIVTLPRARR) the chain is Cytoplasmic. A helical transmembrane segment spans residues 164–183 (AVAAIWVASVVFSTLFIAYY). At 184-191 (DHVAVLLC) the chain is on the extracellular side. A helical transmembrane segment spans residues 192–211 (LVVFFLAMLVLMAVLYVHML). Residues 212 to 240 (ARACQHAQGIARLHKRQRPVHQGFGLKGA) are Cytoplasmic-facing. The chain crosses the membrane as a helical span at residues 241 to 266 (VTLTILLGIFFLCWGPFFLHLTLIVL). Over 267–279 (CPEHPTCGCIFKN) the chain is Extracellular. The chain crosses the membrane as a helical span at residues 280–300 (FNLFLALIICNAIIDPLIYAF). Residues 301-317 (HSQELRRTLKEVLTCSW) are Cytoplasmic-facing. Cysteine 315 carries the S-palmitoyl cysteine lipid modification.

It belongs to the G-protein coupled receptor 1 family. As to quaternary structure, interacts with MGRN1, but does not undergo MGRN1-mediated ubiquitination; this interaction competes with GNAS-binding and thus inhibits agonist-induced cAMP production. Interacts with OPN3; the interaction results in a decrease in MC1R-mediated cAMP signaling and ultimately a decrease in melanin production in melanocytes. Expressed in melanocytes. Expressed in corticoadrenal tissue.

It localises to the cell membrane. Functionally, receptor for MSH (alpha, beta and gamma) and ACTH. The activity of this receptor is mediated by G proteins which activate adenylate cyclase. Mediates melanogenesis, the production of eumelanin (black/brown) and phaeomelanin (red/yellow), via regulation of cAMP signaling in melanocytes. The sequence is that of Melanocyte-stimulating hormone receptor (MC1R) from Homo sapiens (Human).